The following is a 443-amino-acid chain: ATP-dependent protease ATPase subunit HslU (443 aa).

Residues isoleucine 18, 60–65 (GVGKTE), aspartate 256, glutamate 321, and arginine 393 contribute to the ATP site.

The protein belongs to the ClpX chaperone family. HslU subfamily. In terms of assembly, a double ring-shaped homohexamer of HslV is capped on each side by a ring-shaped HslU homohexamer. The assembly of the HslU/HslV complex is dependent on binding of ATP.

The protein resides in the cytoplasm. Its function is as follows. ATPase subunit of a proteasome-like degradation complex; this subunit has chaperone activity. The binding of ATP and its subsequent hydrolysis by HslU are essential for unfolding of protein substrates subsequently hydrolyzed by HslV. HslU recognizes the N-terminal part of its protein substrates and unfolds these before they are guided to HslV for hydrolysis. The polypeptide is ATP-dependent protease ATPase subunit HslU (Edwardsiella ictaluri (strain 93-146)).